The primary structure comprises 189 residues: Marginal zone B- and B1-cell-specific protein (189 aa).

The N-terminal stretch at 1–22 (MRLSLPLLLLLLGAWAIPGGLG) is a signal peptide. Intrachain disulfides connect Cys50–Cys178, Cys53–Cys171, and Cys95–Cys143. The Prevents secretion from ER signature appears at 186–189 (REEL).

Belongs to the MZB1 family. As to quaternary structure, part of the ER chaperone complex, a multi-protein complex in the endoplasmic reticulum containing a large number of molecular chaperones which associates with unassembled incompletely folded immunoglobulin heavy chains. Isoform 2 interacts with CASP2 and CASP9. Interacts with HSP90B1 and PDIA3 in a calcium-dependent manner. In terms of processing, forms an interchain disulfide bond with IgM monomers. As to expression, widely expressed with highest levels in adult brain, small intestine and lymphoid tissues such as thymus and spleen. Expression is frequently lower in intestinal-type gastric cancer. In obese patients, more abundant in omental than in subcutaneous fat.

It is found in the endoplasmic reticulum lumen. Its subcellular location is the secreted. The protein localises to the cytoplasm. In terms of biological role, associates with immunoglobulin M (IgM) heavy and light chains and promotes IgM assembly and secretion. May exert its effect by acting as a molecular chaperone or as an oxidoreductase as it displays a low level of oxidoreductase activity. Isoform 2 may be involved in regulation of apoptosis. Helps to diversify peripheral B-cell functions by regulating Ca(2+) stores, antibody secretion and integrin activation. Its function is as follows. Acts as a hormone-regulated adipokine/pro-inflammatory cytokine that is implicated in causing chronic inflammation, affecting cellular expansion and blunting insulin response in adipocytes. May have a role in the onset of insulin resistance. The chain is Marginal zone B- and B1-cell-specific protein (MZB1) from Homo sapiens (Human).